A 285-amino-acid chain; its full sequence is MSFERPQDPSSALEQATQDVSNLKSESRFLLEEIRASDLEFYESKKRFLNKDTQIHKFIKQHGSLVDNPKEAEFQERIKEDLERCHQLQVDKCTVANSLLYMVTKHLKKVQANIEALEEDGLLAPLEDDAVELANELSRESSVLSSGTSLERRKRTVAAGTLSAGSSLRKRVKKERGRSTQRDGMLSEPPSDEASSHGANFADDLQDFNDELFSLNQQEEDDKQLYCFCQSVSYGEMVACDGPNCKYEWFHYGCVNLDEPPKGQWYCPECRQEMANLKLKKKKRV.

Disordered stretches follow at residues 1–24 (MSFERPQDPSSALEQATQDVSNLK) and 155–201 (RTVA…GANF). Positions 8–24 (DPSSALEQATQDVSNLK) are enriched in polar residues. The stretch at 10 to 36 (SSALEQATQDVSNLKSESRFLLEEIRA) forms a coiled coil. Residues 224-273 (QLYCFCQSVSYGEMVACDGPNCKYEWFHYGCVNLDEPPKGQWYCPECRQE) form a PHD-type zinc finger. Zn(2+) is bound by residues Cys-227, Cys-229, Cys-240, Cys-245, His-251, Cys-254, Cys-267, and Cys-270.

Belongs to the ING family. As to quaternary structure, interacts with H3K4me3 and to a lesser extent with H3K4me2. Component of the NuA4 histone acetyltransferase complex.

It localises to the nucleus. Its function is as follows. Component of the NuA4 histone acetyltransferase complex which is involved in transcriptional activation of selected genes principally by acetylation of nucleosomal histone H4 and H2A. The NuA4 complex is also involved in DNA repair. Involved in cell cycle progression and meiosis. This is Chromatin modification-related protein YNG2 (YNG2) from Eremothecium gossypii (strain ATCC 10895 / CBS 109.51 / FGSC 9923 / NRRL Y-1056) (Yeast).